Consider the following 424-residue polypeptide: S-adenosylmethionine synthase (424 aa).

His16 is a binding site for ATP. Asp18 contacts Mg(2+). K(+) is bound at residue Glu44. Residues Glu57 and Gln100 each contribute to the L-methionine site. The segment at 100 to 110 (QSPDIAQGVNT) is flexible loop. ATP-binding positions include 175–177 (DGK), 251–252 (KF), Asp260, 266–267 (RK), Ala283, and Lys287. Asp260 is a binding site for L-methionine. Lys291 serves as a coordination point for L-methionine.

This sequence belongs to the AdoMet synthase family. As to quaternary structure, homotetramer; dimer of dimers. The cofactor is Mg(2+). K(+) is required as a cofactor.

Its subcellular location is the cytoplasm. The catalysed reaction is L-methionine + ATP + H2O = S-adenosyl-L-methionine + phosphate + diphosphate. It participates in amino-acid biosynthesis; S-adenosyl-L-methionine biosynthesis; S-adenosyl-L-methionine from L-methionine: step 1/1. In terms of biological role, catalyzes the formation of S-adenosylmethionine (AdoMet) from methionine and ATP. The overall synthetic reaction is composed of two sequential steps, AdoMet formation and the subsequent tripolyphosphate hydrolysis which occurs prior to release of AdoMet from the enzyme. This is S-adenosylmethionine synthase from Nostoc punctiforme (strain ATCC 29133 / PCC 73102).